The primary structure comprises 262 residues: Small ribosomal subunit protein eS4C (262 aa).

Positions 42-105 (LPLIVFLRNR…GEHFRLVYDI (64 aa)) constitute an S4 RNA-binding domain. T194 is modified (phosphothreonine).

This sequence belongs to the eukaryotic ribosomal protein eS4 family. As to quaternary structure, component of the small ribosomal subunit (SSU). Mature yeast ribosomes consist of a small (40S) and a large (60S) subunit. The 40S small subunit contains 1 molecule of ribosomal RNA (18S rRNA) and at least 33 different proteins. The large 60S subunit contains 3 rRNA molecules (25S, 5.8S and 5S rRNA) and at least 46 different proteins.

It localises to the cytoplasm. Functionally, component of the ribosome, a large ribonucleoprotein complex responsible for the synthesis of proteins in the cell. The small ribosomal subunit (SSU) binds messenger RNAs (mRNAs) and translates the encoded message by selecting cognate aminoacyl-transfer RNA (tRNA) molecules. The large subunit (LSU) contains the ribosomal catalytic site termed the peptidyl transferase center (PTC), which catalyzes the formation of peptide bonds, thereby polymerizing the amino acids delivered by tRNAs into a polypeptide chain. The nascent polypeptides leave the ribosome through a tunnel in the LSU and interact with protein factors that function in enzymatic processing, targeting, and the membrane insertion of nascent chains at the exit of the ribosomal tunnel. The sequence is that of Small ribosomal subunit protein eS4C (rps403) from Schizosaccharomyces pombe (strain 972 / ATCC 24843) (Fission yeast).